We begin with the raw amino-acid sequence, 295 residues long: ATP synthase gamma chain (295 aa).

Belongs to the ATPase gamma chain family. In terms of assembly, F-type ATPases have 2 components, CF(1) - the catalytic core - and CF(0) - the membrane proton channel. CF(1) has five subunits: alpha(3), beta(3), gamma(1), delta(1), epsilon(1). CF(0) has three main subunits: a, b and c.

The protein localises to the cell membrane. Produces ATP from ADP in the presence of a proton gradient across the membrane. The gamma chain is believed to be important in regulating ATPase activity and the flow of protons through the CF(0) complex. The polypeptide is ATP synthase gamma chain (Herpetosiphon aurantiacus (strain ATCC 23779 / DSM 785 / 114-95)).